The sequence spans 134 residues: Large-conductance mechanosensitive channel (134 aa).

Helical transmembrane passes span 16 to 36 and 81 to 101; these read VIDL…VTAL and GDFI…FIIV.

The protein belongs to the MscL family. As to quaternary structure, homopentamer.

It localises to the cell inner membrane. Channel that opens in response to stretch forces in the membrane lipid bilayer. May participate in the regulation of osmotic pressure changes within the cell. In Xylella fastidiosa (strain Temecula1 / ATCC 700964), this protein is Large-conductance mechanosensitive channel.